The primary structure comprises 410 residues: MVDRWYNIAADLPSVLAPPRDPDEGESRIGLLSKILPSALIDQEFTAERWVSIPEEVREAYRRVGRPTPLFRAEGLEKALGTGVRIYYKYEGVLPVGSHKLNTALAQAYYAKADGAVEVATETGAGQWGMAVSLAAALFGLRAVVFMTRSSYNSKRQRLTFMRAYGAVVYPSPSDVTEAGRRHYRPDHPGSLGIAISEAVEYVLSGERRKYLPGSVMEFVLLHQTVIGLEAVRQLPEEPDVAVACVGGGSNFAGFTYPMIGMKLRGEGFGRTRFVAVESEAAPKLTRGEYKYDFPDAVGVLPMLKMYTLGHDYVPPAIHAAGLRYHGAAPSLSLLRKLGIVEAVAYPQEEVMRAALLFARTEGIVPAPESAHAIKAAVDLAKKLPRGSVIAFNLSGHGLLDSDAYEKFLG.

Position 100 is an N6-(pyridoxal phosphate)lysine (Lys100).

Belongs to the TrpB family. As to quaternary structure, tetramer of two alpha and two beta chains. The cofactor is pyridoxal 5'-phosphate.

It carries out the reaction (1S,2R)-1-C-(indol-3-yl)glycerol 3-phosphate + L-serine = D-glyceraldehyde 3-phosphate + L-tryptophan + H2O. It participates in amino-acid biosynthesis; L-tryptophan biosynthesis; L-tryptophan from chorismate: step 5/5. Functionally, the beta subunit is responsible for the synthesis of L-tryptophan from indole and L-serine. The polypeptide is Tryptophan synthase beta chain (Pyrobaculum aerophilum (strain ATCC 51768 / DSM 7523 / JCM 9630 / CIP 104966 / NBRC 100827 / IM2)).